Here is a 353-residue protein sequence, read N- to C-terminus: S-adenosylmethionine:tRNA ribosyltransferase-isomerase (353 aa).

The protein belongs to the QueA family. In terms of assembly, monomer.

It is found in the cytoplasm. It catalyses the reaction 7-aminomethyl-7-carbaguanosine(34) in tRNA + S-adenosyl-L-methionine = epoxyqueuosine(34) in tRNA + adenine + L-methionine + 2 H(+). It participates in tRNA modification; tRNA-queuosine biosynthesis. Functionally, transfers and isomerizes the ribose moiety from AdoMet to the 7-aminomethyl group of 7-deazaguanine (preQ1-tRNA) to give epoxyqueuosine (oQ-tRNA). In Sodalis glossinidius (strain morsitans), this protein is S-adenosylmethionine:tRNA ribosyltransferase-isomerase.